Consider the following 335-residue polypeptide: Putative peroxisomal biogenesis factor 19 (335 aa).

Disordered regions lie at residues 14–70 and 104–124; these read LETQ…LGND and YNKDINNNSDDSNNGGLPSEE. 2 stretches are compositionally biased toward low complexity: residues 22 to 55 and 109 to 119; these read PTTTKTTTTTTTTTTSNTTKTINNNNNTVTPSTI and NNNSDDSNNGG.

It belongs to the peroxin-19 family.

The protein localises to the peroxisome. The chain is Putative peroxisomal biogenesis factor 19 (pex19) from Dictyostelium discoideum (Social amoeba).